We begin with the raw amino-acid sequence, 281 residues long: Bis(5'-nucleosyl)-tetraphosphatase, symmetrical (281 aa).

Belongs to the Ap4A hydrolase family.

The catalysed reaction is P(1),P(4)-bis(5'-adenosyl) tetraphosphate + H2O = 2 ADP + 2 H(+). Functionally, hydrolyzes diadenosine 5',5'''-P1,P4-tetraphosphate to yield ADP. This Pectobacterium carotovorum subsp. carotovorum (strain PC1) protein is Bis(5'-nucleosyl)-tetraphosphatase, symmetrical.